Reading from the N-terminus, the 130-residue chain is S-adenosylmethionine decarboxylase proenzyme (130 aa).

The active-site Schiff-base intermediate with substrate; via pyruvic acid is Ser-64. Ser-64 carries the post-translational modification Pyruvic acid (Ser); by autocatalysis. Catalysis depends on His-69, which acts as the Proton acceptor; for processing activity. Catalysis depends on Cys-84, which acts as the Proton donor; for catalytic activity.

This sequence belongs to the prokaryotic AdoMetDC family. Type 1 subfamily. Heterotetramer of two alpha and two beta chains arranged as a dimer of alpha/beta heterodimers. The cofactor is pyruvate. Is synthesized initially as an inactive proenzyme. Formation of the active enzyme involves a self-maturation process in which the active site pyruvoyl group is generated from an internal serine residue via an autocatalytic post-translational modification. Two non-identical subunits are generated from the proenzyme in this reaction, and the pyruvate is formed at the N-terminus of the alpha chain, which is derived from the carboxyl end of the proenzyme. The post-translation cleavage follows an unusual pathway, termed non-hydrolytic serinolysis, in which the side chain hydroxyl group of the serine supplies its oxygen atom to form the C-terminus of the beta chain, while the remainder of the serine residue undergoes an oxidative deamination to produce ammonia and the pyruvoyl group blocking the N-terminus of the alpha chain.

The catalysed reaction is S-adenosyl-L-methionine + H(+) = S-adenosyl 3-(methylsulfanyl)propylamine + CO2. Its pathway is amine and polyamine biosynthesis; S-adenosylmethioninamine biosynthesis; S-adenosylmethioninamine from S-adenosyl-L-methionine: step 1/1. In terms of biological role, catalyzes the decarboxylation of S-adenosylmethionine to S-adenosylmethioninamine (dcAdoMet), the propylamine donor required for the synthesis of the polyamines spermine and spermidine from the diamine putrescine. This chain is S-adenosylmethionine decarboxylase proenzyme, found in Picrophilus torridus (strain ATCC 700027 / DSM 9790 / JCM 10055 / NBRC 100828 / KAW 2/3).